The primary structure comprises 141 residues: HTH-type transcriptional repressor NsrR (141 aa).

The 128-residue stretch at 2–129 (QLTSFTDYGL…DNYTLADMVQ (128 aa)) folds into the HTH rrf2-type domain. The segment at residues 28–51 (ISQVTEVYGVSRNHMVKIINQLSR) is a DNA-binding region (H-T-H motif). Residues Cys-91, Cys-96, and Cys-102 each coordinate [2Fe-2S] cluster.

Requires [2Fe-2S] cluster as cofactor.

In terms of biological role, nitric oxide-sensitive repressor of genes involved in protecting the cell against nitrosative stress. May require iron for activity. The sequence is that of HTH-type transcriptional repressor NsrR from Yersinia enterocolitica serotype O:8 / biotype 1B (strain NCTC 13174 / 8081).